The chain runs to 207 residues: LexA repressor (207 aa).

Residues 28 to 48 constitute a DNA-binding region (H-T-H motif); it reads VREIGEAVGLASSSTVHGHLA. Catalysis depends on for autocatalytic cleavage activity residues S129 and K167.

This sequence belongs to the peptidase S24 family. As to quaternary structure, homodimer.

It carries out the reaction Hydrolysis of Ala-|-Gly bond in repressor LexA.. Functionally, represses a number of genes involved in the response to DNA damage (SOS response), including recA and lexA. In the presence of single-stranded DNA, RecA interacts with LexA causing an autocatalytic cleavage which disrupts the DNA-binding part of LexA, leading to derepression of the SOS regulon and eventually DNA repair. This is LexA repressor from Geobacillus sp. (strain WCH70).